The sequence spans 221 residues: uncharacterized protein (221 aa).

An N-terminal signal peptide occupies residues 1–18 (MKRFLLLIILFGISFSFV).

This is an uncharacterized protein from Aquifex aeolicus (strain VF5).